Reading from the N-terminus, the 430-residue chain is Cytochrome P450 monooxygenase FGSG_15680 (430 aa).

Residue Cys351 coordinates heme.

Belongs to the cytochrome P450 family. Requires heme as cofactor.

The protein operates within mycotoxin biosynthesis. In terms of biological role, cytochrome P450 monooxygenase; part of the gene cluster that mediates the biosynthesis of gramillins A and B, bicyclic lipopeptides that induce cell death in maize leaves but not in wheat leaves. The nonribosomal peptide synthetase GRA1 incorporates respectively a glutamic adic (Glu), a leucine (Leu), a serine (Ser), a hydroxyglutamine (HOGln), a 2-amino decanoic acid, and 2 cysteins (CysB and CysA). The biosynthesis of 2-amino decanoic acid incorporated in gramillins could be initiated by a fatty acid synthase composed of the alpha and beta subunits FGSG_00036 and FGSG_11656. The cytochrome P450 monooxygenase FGSG_15680 could hydroxylate the fatty acid chain. Subsequent oxidation to the ketone by the oxidoreductase FGSG_00048 and transamination by aminotransferase FGSG_00049 could form 2-amino-decanoic acid. On the other hand, FGSG_15680 could also be responsible for the HO-modified glutamine at the gamma-position. Whether hydroxylation occurs on the fully assembled product or on the Gln residue prior to assembly into the gramillins requires further proof. The thioredoxin FGSG_00043 could also be required for the disulfide-bond formation between CysA and CysB. The specific involvement of the remaining proteins from the cluster is more difficult to discern, but could have broader regulatory (FGSG_00040 and FGSG_11657) or enzymatic functions (FGSG_00044 and FGSG_00045). The final C-domain of GRA1 does not possess the expected sequence of a termination CT domain, often implicated in macrocyclization and release of a cyclopeptidein fungal NRPs; and the thioesterase FGSG_00047 may act in concert with the terminal C-domain of GRA1 to catalyze the formation of the macrocyclic anhydride and release of the products. The sequence is that of Cytochrome P450 monooxygenase FGSG_15680 from Gibberella zeae (strain ATCC MYA-4620 / CBS 123657 / FGSC 9075 / NRRL 31084 / PH-1) (Wheat head blight fungus).